The chain runs to 266 residues: Esterase AGAP003155 (266 aa).

Active-site charge relay system residues include S114, D172, and H199. The interval 231–266 (ATEENSFHLEGQEEAEESALQPVHEGLQNGSDSDSD) is disordered.

Belongs to the LovG family.

This chain is Esterase AGAP003155, found in Anopheles gambiae (African malaria mosquito).